The sequence spans 289 residues: LysM and putative peptidoglycan-binding domain-containing protein 4 (289 aa).

Residues methionine 1–serine 23 form a disordered region. Topologically, residues methionine 1–arginine 208 are extracellular. The span at histidine 9–serine 23 shows a compositional bias: polar residues. N-linked (GlcNAc...) asparagine glycosylation is found at asparagine 30 and asparagine 59. The LysM domain occupies leucine 71–isoleucine 115. Residues asparagine 134 and asparagine 178 are each glycosylated (N-linked (GlcNAc...) asparagine). Residues tryptophan 209–valine 229 form a helical membrane-spanning segment. The Cytoplasmic portion of the chain corresponds to tyrosine 230–glycine 289. The interval serine 252–glycine 272 is disordered.

It localises to the membrane. This is LysM and putative peptidoglycan-binding domain-containing protein 4 (lysmd4) from Xenopus laevis (African clawed frog).